Reading from the N-terminus, the 461-residue chain is MNDQYHRAARDGYLELLKEATRKELNAPDEDGMTPTLWAAYHGNLESLRLIVSRGGDPDKCDIWGNTPLHLAASNGHLHCLSFLVSFGANIWCLDNDYHTPLDMAAMKGHMECVRYLDSIAAKQSSLNPKLVGKLKDKAFREAERRIRECAKMQRKHHERMERRYRRELAERSDTLSFSSLTSSTLSRRLQHMTLGSQLPYSQATLHGTAKGKAKIQKKLERRKQGGEGTFKVSEDGRKSVRSLSGLQLGSDVMFVRQGTYANPKEWGRAPLRDMFLSDEDSVSRATLAAEPAHSEVSTDSGHDSLFTRPGLGTMVFRRNYVSSGLHGLGREDGGLDGAGTPRGRLHSSPSLDDDSLGSANSLQDRSCGEELPWDELDLGLDEDLEPETSPLETFLASLHMEDFASLLRHEKIDLEALMLCSDLDLRSISVPLGPRKKILGAVRRRRQALERPLALEDTEL.

ANK repeat units follow at residues 31-60 (DGMTPTLWAAYHGNLESLRLIVSRGGDPDK), 64-93 (WGNTPLHLAASNGHLHCLSFLVSFGANIWC), and 97-126 (DYHTPLDMAAMKGHMECVRYLDSIAAKQSS). Positions 329–368 (LGREDGGLDGAGTPRGRLHSSPSLDDDSLGSANSLQDRSC) are disordered. Positions 385–447 (LEPETSPLET…KILGAVRRRR (63 aa)) constitute an SAM domain. S422 is subject to Phosphoserine.

In terms of assembly, part of a complex composed of USH1C, USH1G and MYO7A. Interacts with USH1C (via the first PDZ domain). Interacts with PDZD7. Interacts with CDH23 and PCDH15; these interactions may recruit USH1G to the plasma membrane. Interacts with intraflagellar transport proteins IFT20, IFT52 and IFT57. Interacts with splicing factors SF3B1, PRPF6, PRPF31 and SON. Interacts with the U4/U6.U5 tri-small nuclear ribonucleoprotein (tri-snRNP) complex in the presence of pre-mRNAs. Interacts (via SAM domain) with MAGI2 (via PDZ 6 domain); the interaction is triggered by phosphorylation of USH1G by CK2 and negatively regulates MAGI2-mediated endocytosis. As to expression, detected in stereocilia from cochlear hair cells (at protein level). Detected in retinal photoreceptor cell cilia (at protein level). Highly expressed in the cochlea, testis, cerebellum and eye, and low levels in brain, thymus and spleen. Significant signals detected in the neurosensory epithelium of inner ear cochlea and saccule, especially in inner and outer hair cells.

The protein localises to the cytoplasm. Its subcellular location is the cytosol. It localises to the cytoskeleton. It is found in the cell membrane. The protein resides in the cell projection. The protein localises to the cilium. Its subcellular location is the nucleus speckle. It localises to the nucleus. It is found in the cajal body. The protein resides in the microtubule organizing center. The protein localises to the centrosome. Its subcellular location is the photoreceptor inner segment. In terms of biological role, plays a role in pre-mRNA splicing by regulating the release and transfer of U4/U6.U5 tri-small nuclear ribonucleoprotein (tri-snRNP) complexes from their assembly site in Cajal bodies to nuclear speckles, thereby contributing to the assembly of the pre-catalytic spliceosome on target pre-mRNAs. May also participate in recycling of snRNPs back to Cajal bodies during splicing. Plays a role in regulating MAGI2-mediated endocytosis. Anchoring/scaffolding protein that is a part of the functional network formed by USH1C, USH1G, CDH23 and MYO7A that mediates mechanotransduction in cochlear hair cells. Required for normal development and maintenance of cochlear hair cell bundles. Required for normal hearing. The polypeptide is pre-mRNA splicing regulator USH1G (Ush1g) (Mus musculus (Mouse)).